The sequence spans 188 residues: MPIKSDKWIRRMAESHQLIYPFEPKQVRETPSGKVISYGTSSYGYDVRCADEFKIFTNINASIVDPKNFDPNGFIDLKANVCIIPPNSFVLARTVEYFKIPRNILTICLGKSTYARCGIIVNVTPLEPEWEGHVTLEFSNTTNLPAKIYANEGVAQMLFLESDEVCDISYKDRGGKYQGQKGVTLPVA.

DCTP-binding positions include 111 to 116, 135 to 137, Gln-156, Tyr-170, and Gln-180; these read KSTYAR and TLE. Catalysis depends on Glu-137, which acts as the Proton donor/acceptor.

This sequence belongs to the dCTP deaminase family. Homotrimer.

It catalyses the reaction dCTP + H2O + H(+) = dUTP + NH4(+). The protein operates within pyrimidine metabolism; dUMP biosynthesis; dUMP from dCTP (dUTP route): step 1/2. Catalyzes the deamination of dCTP to dUTP. This is dCTP deaminase from Coxiella burnetii (strain CbuK_Q154) (Coxiella burnetii (strain Q154)).